The chain runs to 353 residues: Phosphate acyltransferase (353 aa).

Belongs to the PlsX family. As to quaternary structure, homodimer. Probably interacts with PlsY.

It localises to the cytoplasm. The catalysed reaction is a fatty acyl-[ACP] + phosphate = an acyl phosphate + holo-[ACP]. The protein operates within lipid metabolism; phospholipid metabolism. Catalyzes the reversible formation of acyl-phosphate (acyl-PO(4)) from acyl-[acyl-carrier-protein] (acyl-ACP). This enzyme utilizes acyl-ACP as fatty acyl donor, but not acyl-CoA. This is Phosphate acyltransferase from Afipia carboxidovorans (strain ATCC 49405 / DSM 1227 / KCTC 32145 / OM5) (Oligotropha carboxidovorans).